Reading from the N-terminus, the 70-residue chain is Probable ferredoxin TA0517 (70 aa).

4Fe-4S ferredoxin-type domains follow at residues 8–36 (TEMD…WLDE) and 37–66 (TVIK…AEWF). Residues cysteine 17, cysteine 20, cysteine 23, cysteine 27, cysteine 46, cysteine 49, cysteine 52, and cysteine 56 each contribute to the [4Fe-4S] cluster site.

Requires [4Fe-4S] cluster as cofactor.

Functionally, ferredoxins are iron-sulfur proteins that transfer electrons in a wide variety of metabolic reactions. This is Probable ferredoxin TA0517 from Thermoplasma acidophilum (strain ATCC 25905 / DSM 1728 / JCM 9062 / NBRC 15155 / AMRC-C165).